A 324-amino-acid chain; its full sequence is DNA-directed RNA polymerase subunit alpha (324 aa).

The alpha N-terminal domain (alpha-NTD) stretch occupies residues 1 to 230 (MQSSGLLKPR…EQLSVFADLE (230 aa)). An alpha C-terminal domain (alpha-CTD) region spans residues 244–324 (VDPVLLRPVD…NWPPAGLEKA (81 aa)).

It belongs to the RNA polymerase alpha chain family. In terms of assembly, homodimer. The RNAP catalytic core consists of 2 alpha, 1 beta, 1 beta' and 1 omega subunit. When a sigma factor is associated with the core the holoenzyme is formed, which can initiate transcription.

It carries out the reaction RNA(n) + a ribonucleoside 5'-triphosphate = RNA(n+1) + diphosphate. In terms of biological role, DNA-dependent RNA polymerase catalyzes the transcription of DNA into RNA using the four ribonucleoside triphosphates as substrates. The polypeptide is DNA-directed RNA polymerase subunit alpha (Dechloromonas aromatica (strain RCB)).